We begin with the raw amino-acid sequence, 438 residues long: Phosphatidylserine decarboxylase proenzyme 1, mitochondrial (438 aa).

A mitochondrion-targeting transit peptide spans 1 to 21 (MRRFRVWPPSPSPWPLLASRP). Topologically, residues 22–48 (CPHSHHHRSPFHASANSGARQGNFILP) are mitochondrial matrix. Residues 49–67 (GATAATLVMFGILHARRMY) traverse the membrane as a helical segment. Residues 68–438 (EDQKVVERKE…EAIGRWTSRE (371 aa)) lie on the Mitochondrial intermembrane side of the membrane. Residues Asp-173, His-273, and Ser-387 each act as charge relay system; for autoendoproteolytic cleavage activity in the active site. The Schiff-base intermediate with substrate; via pyruvic acid; for decarboxylase activity role is filled by Ser-387. Residue Ser-387 is modified to Pyruvic acid (Ser); by autocatalysis.

Belongs to the phosphatidylserine decarboxylase family. PSD-B subfamily. Eukaryotic type I sub-subfamily. As to quaternary structure, heterodimer of a large membrane-associated beta subunit and a small pyruvoyl-containing alpha subunit. Pyruvate serves as cofactor. Post-translationally, is synthesized initially as an inactive proenzyme. Formation of the active enzyme involves a self-maturation process in which the active site pyruvoyl group is generated from an internal serine residue via an autocatalytic post-translational modification. Two non-identical subunits are generated from the proenzyme in this reaction, and the pyruvate is formed at the N-terminus of the alpha chain, which is derived from the carboxyl end of the proenzyme. The autoendoproteolytic cleavage occurs by a canonical serine protease mechanism, in which the side chain hydroxyl group of the serine supplies its oxygen atom to form the C-terminus of the beta chain, while the remainder of the serine residue undergoes an oxidative deamination to produce ammonia and the pyruvoyl prosthetic group on the alpha chain. During this reaction, the Ser that is part of the protease active site of the proenzyme becomes the pyruvoyl prosthetic group, which constitutes an essential element of the active site of the mature decarboxylase.

It is found in the mitochondrion inner membrane. It catalyses the reaction a 1,2-diacyl-sn-glycero-3-phospho-L-serine + H(+) = a 1,2-diacyl-sn-glycero-3-phosphoethanolamine + CO2. It functions in the pathway phospholipid metabolism; phosphatidylethanolamine biosynthesis; phosphatidylethanolamine from CDP-diacylglycerol: step 2/2. Catalyzes the formation of phosphatidylethanolamine (PtdEtn) from phosphatidylserine (PtdSer). Plays a central role in phospholipid metabolism and in the interorganelle trafficking of phosphatidylserine. The chain is Phosphatidylserine decarboxylase proenzyme 1, mitochondrial (PSD1) from Oryza sativa subsp. japonica (Rice).